The primary structure comprises 55 residues: Small ribosomal subunit protein uS14 (55 aa).

Residues 1-20 (MSFEPSGPHSHRKPFGKGSR) form a disordered region. Residues cysteine 22, cysteine 25, cysteine 38, and cysteine 41 each coordinate Zn(2+).

It belongs to the universal ribosomal protein uS14 family. Zn(2+) serves as cofactor.

In Encephalitozoon cuniculi (strain GB-M1) (Microsporidian parasite), this protein is Small ribosomal subunit protein uS14 (RPS29).